A 552-amino-acid polypeptide reads, in one-letter code: Glutamine--tRNA ligase (552 aa).

Positions 34-44 (PEPNGYLHIGH) match the 'HIGH' region motif. ATP contacts are provided by residues 35–37 (EPN) and 41–47 (HIGHAKS). The L-glutamine site is built by Asp-67 and Tyr-212. Residues Thr-231, 261-262 (RL), and 269-271 (MSK) contribute to the ATP site. A 'KMSKS' region motif is present at residues 268-272 (IMSKR).

This sequence belongs to the class-I aminoacyl-tRNA synthetase family. As to quaternary structure, monomer.

The protein localises to the cytoplasm. The enzyme catalyses tRNA(Gln) + L-glutamine + ATP = L-glutaminyl-tRNA(Gln) + AMP + diphosphate. The polypeptide is Glutamine--tRNA ligase (Aliivibrio salmonicida (strain LFI1238) (Vibrio salmonicida (strain LFI1238))).